We begin with the raw amino-acid sequence, 297 residues long: Myoblast determination protein 1 homolog (297 aa).

The tract at residues 52–76 (KPEEHPHHHGHHHGHPHEEEHVRAP) is disordered. Residues 101–152 (DRRKAATMRERRRLSKVNEAFETLKRCTSTNPNQRLPKVEILRNAIRYIESL) form the bHLH domain. Disordered regions lie at residues 171–221 (SGES…GKSS) and 243–297 (CPIL…YQVL). Polar residues-rich tracts occupy residues 174-184 (SDASSPRSNCS) and 258-297 (CSPQEGASLNDSGAQIPSPTNCTPLPQDSSSSSNPIYQVL).

Efficient DNA binding requires dimerization with another bHLH protein. Seems to form active heterodimers with ITF-2.

It localises to the nucleus. Its function is as follows. Acts as a transcriptional activator that promotes transcription of muscle-specific target genes and plays a role in muscle differentiation. Induces fibroblasts to differentiate into myoblasts. Interacts with and is inhibited by the twist protein. This interaction probably involves the basic domains of both proteins. The sequence is that of Myoblast determination protein 1 homolog (MYOD1) from Coturnix japonica (Japanese quail).